The following is a 22-amino-acid chain: Phenol-soluble modulin alpha 3 peptide (22 aa).

The protein belongs to the phenol-soluble modulin alpha peptides family.

Functionally, peptide which can recruit, activate and subsequently lyse human neutrophils, thus eliminating the main cellular defense against infection. This is Phenol-soluble modulin alpha 3 peptide (psmA3) from Staphylococcus aureus (strain Mu3 / ATCC 700698).